Consider the following 179-residue polypeptide: Putative FBD-associated F-box protein At3g12840 (179 aa).

Positions 14 to 60 (AARINDLPDDLLATVLSFVPTKDAVATSILSKRWRPIWKRAVNLESD) constitute an F-box domain. An FBD domain is found at 101 to 152 (KWKQPDFVPLSLYRSLEAFEWIGFKGREKTEKKAAFHILRNACNLKTMAITT).

In Arabidopsis thaliana (Mouse-ear cress), this protein is Putative FBD-associated F-box protein At3g12840.